Reading from the N-terminus, the 197-residue chain is Probable molybdenum cofactor guanylyltransferase (197 aa).

Residues 9–11, K21, D65, and D94 each bind GTP; that span reads LAG. D94 contributes to the Mg(2+) binding site.

Belongs to the MobA family. Mg(2+) serves as cofactor.

The protein localises to the cytoplasm. The enzyme catalyses Mo-molybdopterin + GTP + H(+) = Mo-molybdopterin guanine dinucleotide + diphosphate. Its function is as follows. Transfers a GMP moiety from GTP to Mo-molybdopterin (Mo-MPT) cofactor (Moco or molybdenum cofactor) to form Mo-molybdopterin guanine dinucleotide (Mo-MGD) cofactor. The chain is Probable molybdenum cofactor guanylyltransferase from Carboxydothermus hydrogenoformans (strain ATCC BAA-161 / DSM 6008 / Z-2901).